The primary structure comprises 39 residues: U2-ctenitoxin-Co1a (39 aa).

Post-translationally, disulfide bonds are present. In terms of tissue distribution, expressed by the venom gland.

Its subcellular location is the secreted. Omega-agatoxins are antagonists of voltage-gated calcium channels (Cav). The sequence is that of U2-ctenitoxin-Co1a from Ctenus ornatus (Brazilian spider).